Consider the following 362-residue polypeptide: Large ribosomal subunit protein uL3 (362 aa).

Residues 340–362 are disordered; that stretch reads RPPKKKPPVQRPQITYVSVESKQ. Positions 351 to 362 are enriched in polar residues; the sequence is PQITYVSVESKQ.

The protein belongs to the universal ribosomal protein uL3 family. Part of the 50S ribosomal subunit. Forms a cluster with proteins L14 and L24e.

One of the primary rRNA binding proteins, it binds directly near the 3'-end of the 23S rRNA, where it nucleates assembly of the 50S subunit. This chain is Large ribosomal subunit protein uL3, found in Pyrococcus horikoshii (strain ATCC 700860 / DSM 12428 / JCM 9974 / NBRC 100139 / OT-3).